The sequence spans 914 residues: Neutral alpha-glucosidase C (914 aa).

Asp-511 (nucleophile) is an active-site residue. Residue Glu-514 is part of the active site. Asp-587 acts as the Proton donor in catalysis.

Belongs to the glycosyl hydrolase 31 family.

It catalyses the reaction Hydrolysis of terminal, non-reducing (1-&gt;4)-linked alpha-D-glucose residues with release of alpha-D-glucose.. Functionally, has alpha-glucosidase activity. In Homo sapiens (Human), this protein is Neutral alpha-glucosidase C (GANC).